The chain runs to 263 residues: Splicing regulator sde2 (263 aa).

A propeptide spans 1-84 (UBL); it reads MECKTVFLNG…LTLCTRVLGG (84 aa). 3 disordered regions span residues 95 to 118, 137 to 158, and 194 to 263; these read AGGR…LDGN, PAET…LAAD, and STSA…LYGL. Residues 102-117 are compositionally biased toward basic and acidic residues; the sequence is KRNEQENQDSCRDLDG. 2 stretches are compositionally biased toward low complexity: residues 194 to 209 and 219 to 230; these read STSA…GATT and NNNSSINSWSRR.

It belongs to the SDE2 family. Interacts with cay1/cactin. Interacts with prp19. Interacts with cwf12. Interacts with cdc5. The N-terminal UBL (ubiquitin-like) propeptide is cleaved at Gly-84 by the deubiquitinating enzymes ubp5 and ubp15; the resulting mature sde2 associates with spliceosomes. In terms of processing, polyubiquitinated; ubiquitination is partially dependent on ubr11.

The protein resides in the cytoplasm. The protein localises to the nucleus. Plays a role in pre-mRNA splicing by facilitating excision of introns featuring relatively long (&gt;21 nucleotides) spacing between the branchpoint and 3'-splice site (ss). Recruits cactin to the spliceosome which may enable folding of RNA between the branchpoint and 3'-ss, to guide the splice site towards the spliceosome's catalytic center. Required for proper chromatin organization by assisting splicing of components involved in genomic stability and telomere organization. This is Splicing regulator sde2 from Schizosaccharomyces pombe (strain 972 / ATCC 24843) (Fission yeast).